The sequence spans 166 residues: Cyclin-dependent kinase 4 inhibitor D (166 aa).

Residue Met1 is modified to N-acetylmethionine. ANK repeat units lie at residues 41 to 69 (FGKT…SPNV), 73 to 102 (SGTS…DVNA), 106 to 135 (TGSL…LHHR), and 138 to 165 (SGLT…MMIP).

It belongs to the CDKN2 cyclin-dependent kinase inhibitor family. In terms of assembly, interacts with CDK6.

It is found in the nucleus. The protein localises to the cytoplasm. In terms of biological role, interacts strongly with CDK4 and CDK6 and inhibits them. The sequence is that of Cyclin-dependent kinase 4 inhibitor D (Cdkn2d) from Mus musculus (Mouse).